The sequence spans 288 residues: Thymidylate synthase (288 aa).

R21 is a binding site for dUMP. (6R)-5,10-methylene-5,6,7,8-tetrahydrofolate is bound at residue N51. 150–151 (RR) serves as a coordination point for dUMP. The active-site Nucleophile is the C170. DUMP contacts are provided by residues 190–193 (RSGD), N201, and 231–233 (HIY). D193 serves as a coordination point for (6R)-5,10-methylene-5,6,7,8-tetrahydrofolate. A287 serves as a coordination point for (6R)-5,10-methylene-5,6,7,8-tetrahydrofolate.

Belongs to the thymidylate synthase family. Bacterial-type ThyA subfamily. Homodimer.

The protein resides in the cytoplasm. It catalyses the reaction dUMP + (6R)-5,10-methylene-5,6,7,8-tetrahydrofolate = 7,8-dihydrofolate + dTMP. It functions in the pathway pyrimidine metabolism; dTTP biosynthesis. Catalyzes the reductive methylation of 2'-deoxyuridine-5'-monophosphate (dUMP) to 2'-deoxythymidine-5'-monophosphate (dTMP) while utilizing 5,10-methylenetetrahydrofolate (mTHF) as the methyl donor and reductant in the reaction, yielding dihydrofolate (DHF) as a by-product. This enzymatic reaction provides an intracellular de novo source of dTMP, an essential precursor for DNA biosynthesis. In Aster yellows witches'-broom phytoplasma (strain AYWB), this protein is Thymidylate synthase.